The chain runs to 570 residues: Sulfite reductase [NADPH] hemoprotein beta-component (570 aa).

4 residues coordinate [4Fe-4S] cluster: C434, C440, C479, and C483. C483 contacts siroheme.

This sequence belongs to the nitrite and sulfite reductase 4Fe-4S domain family. In terms of assembly, alpha(8)-beta(8). The alpha component is a flavoprotein, the beta component is a hemoprotein. The cofactor is siroheme. [4Fe-4S] cluster is required as a cofactor.

It carries out the reaction hydrogen sulfide + 3 NADP(+) + 3 H2O = sulfite + 3 NADPH + 4 H(+). Its pathway is sulfur metabolism; hydrogen sulfide biosynthesis; hydrogen sulfide from sulfite (NADPH route): step 1/1. In terms of biological role, component of the sulfite reductase complex that catalyzes the 6-electron reduction of sulfite to sulfide. This is one of several activities required for the biosynthesis of L-cysteine from sulfate. This Escherichia coli O1:K1 / APEC protein is Sulfite reductase [NADPH] hemoprotein beta-component.